A 205-amino-acid polypeptide reads, in one-letter code: Outer-membrane lipoprotein carrier protein (205 aa).

Residues 1 to 22 (MKKTTLKFAALTLLGLSNLALA) form the signal peptide.

Belongs to the LolA family. Monomer.

The protein localises to the periplasm. Its function is as follows. Participates in the translocation of lipoproteins from the inner membrane to the outer membrane. Only forms a complex with a lipoprotein if the residue after the N-terminal Cys is not an aspartate (The Asp acts as a targeting signal to indicate that the lipoprotein should stay in the inner membrane). In Haemophilus influenzae (strain PittEE), this protein is Outer-membrane lipoprotein carrier protein.